Consider the following 520-residue polypeptide: Protein nucleotidyltransferase YdiU (520 aa).

Glycine 108, glycine 110, arginine 111, lysine 130, aspartate 142, glycine 143, arginine 193, and arginine 200 together coordinate ATP. The Proton acceptor role is filled by aspartate 269. Mg(2+)-binding residues include asparagine 270 and aspartate 279. Aspartate 279 contacts ATP.

It belongs to the SELO family. Mg(2+) is required as a cofactor. The cofactor is Mn(2+).

The enzyme catalyses L-seryl-[protein] + ATP = 3-O-(5'-adenylyl)-L-seryl-[protein] + diphosphate. It catalyses the reaction L-threonyl-[protein] + ATP = 3-O-(5'-adenylyl)-L-threonyl-[protein] + diphosphate. It carries out the reaction L-tyrosyl-[protein] + ATP = O-(5'-adenylyl)-L-tyrosyl-[protein] + diphosphate. The catalysed reaction is L-histidyl-[protein] + UTP = N(tele)-(5'-uridylyl)-L-histidyl-[protein] + diphosphate. The enzyme catalyses L-seryl-[protein] + UTP = O-(5'-uridylyl)-L-seryl-[protein] + diphosphate. It catalyses the reaction L-tyrosyl-[protein] + UTP = O-(5'-uridylyl)-L-tyrosyl-[protein] + diphosphate. Nucleotidyltransferase involved in the post-translational modification of proteins. It can catalyze the addition of adenosine monophosphate (AMP) or uridine monophosphate (UMP) to a protein, resulting in modifications known as AMPylation and UMPylation. This chain is Protein nucleotidyltransferase YdiU, found in Cupriavidus pinatubonensis (strain JMP 134 / LMG 1197) (Cupriavidus necator (strain JMP 134)).